The primary structure comprises 386 residues: MLGALLRLLSACGGVWPTSPAPPARSSSSSSAAAAADQAAAEGRDGLLWWRDLARCHAGELSVAVVQGNHVLEDQCRVESGPPPLAATCIGVFDGHAGPDAARFACDHLLPNLREAASGPEGVTADAIRDAFLATEEGFLAVVSRMWEAQPDMATVGTCCLVGVVHQRTLFVANLGDSRAVLGKKVGRAGQITAEQLSSEHNANEEDVRQELMAQHPDDPQIVALKHGVWRVKGIIQVSRSLGDAYLKHSQYNTEQIKPKFRLPEPFSRPILSANPSIIARCLQPSDCFIIFASDGLWEHLSNQQAVEIVHNHQRAGSARRLIKAALHEAARKREMRYSDLMKIDKKVRRHFHDDITVIVLFINYDQLAKGHSQGQSLSIRCALDH.

Positions 60 to 363 (ELSVAVVQGN…DDITVIVLFI (304 aa)) constitute a PPM-type phosphatase domain. 4 residues coordinate Mn(2+): Asp94, Gly95, Asp295, and Asp354.

This sequence belongs to the PP2C family. It depends on Mg(2+) as a cofactor. Requires Mn(2+) as cofactor.

It carries out the reaction O-phospho-L-seryl-[protein] + H2O = L-seryl-[protein] + phosphate. The enzyme catalyses O-phospho-L-threonyl-[protein] + H2O = L-threonyl-[protein] + phosphate. The protein is Probable protein phosphatase 2C 36 of Oryza sativa subsp. japonica (Rice).